The following is a 90-amino-acid chain: DNA-directed RNA polymerase subunit omega (90 aa).

It belongs to the RNA polymerase subunit omega family. The RNAP catalytic core consists of 2 alpha, 1 beta, 1 beta' and 1 omega subunit. When a sigma factor is associated with the core the holoenzyme is formed, which can initiate transcription.

The catalysed reaction is RNA(n) + a ribonucleoside 5'-triphosphate = RNA(n+1) + diphosphate. Its function is as follows. Promotes RNA polymerase assembly. Latches the N- and C-terminal regions of the beta' subunit thereby facilitating its interaction with the beta and alpha subunits. The sequence is that of DNA-directed RNA polymerase subunit omega from Histophilus somni (strain 129Pt) (Haemophilus somnus).